We begin with the raw amino-acid sequence, 339 residues long: Transcription initiation factor IIB (339 aa).

Residues 39–70 (EELICPVCGSKSIIKDYERAEIVCEMCGCVLQ) form a TFIIB-type zinc finger. 4 residues coordinate Zn(2+): C43, C46, C62, and C65. 2 consecutive repeat copies span residues 156 to 239 (SELD…SREL) and 250 to 331 (DYVP…ELTE).

This sequence belongs to the TFIIB family.

Stabilizes TBP binding to an archaeal box-A promoter. Also responsible for recruiting RNA polymerase II to the pre-initiation complex (DNA-TBP-TFIIB). The protein is Transcription initiation factor IIB of Methanococcus maripaludis (strain C5 / ATCC BAA-1333).